A 224-amino-acid polypeptide reads, in one-letter code: uncharacterized protein (224 aa).

Positions 1–19 are cleaved as a signal peptide; sequence MLRHITFTVFITTSMNTLA.

The protein belongs to the periplasmic pilus chaperone family.

It is found in the periplasm. Its function is as follows. Could be required for the biogenesis of a putative fimbria. This is an uncharacterized protein from Escherichia coli (strain K12).